The primary structure comprises 179 residues: Inner membrane-spanning protein YciB (179 aa).

Helical transmembrane passes span Ile22–Val42, Met50–Asn70, Trp76–Met96, Leu121–Leu141, and Phe149–Ile169.

This sequence belongs to the YciB family.

The protein localises to the cell inner membrane. In terms of biological role, plays a role in cell envelope biogenesis, maintenance of cell envelope integrity and membrane homeostasis. This Klebsiella pneumoniae subsp. pneumoniae (strain ATCC 700721 / MGH 78578) protein is Inner membrane-spanning protein YciB.